A 152-amino-acid chain; its full sequence is Large ribosomal subunit protein bL9 (152 aa).

The protein belongs to the bacterial ribosomal protein bL9 family.

Its function is as follows. Binds to the 23S rRNA. The polypeptide is Large ribosomal subunit protein bL9 (Picosynechococcus sp. (strain ATCC 27264 / PCC 7002 / PR-6) (Agmenellum quadruplicatum)).